The chain runs to 355 residues: Probable NADPH-dependent quinone reductase tdiC (355 aa).

This sequence belongs to the zinc-containing alcohol dehydrogenase family. Requires NADPH as cofactor.

It participates in secondary metabolite biosynthesis. Its function is as follows. Probable NADPH-dependent quinone reductase; part of the gene cluster that mediates the biosynthesis of terrequinone A, an antitumor agent. The first step in the biosynthetic pathway for terrequinone A is formation of indole pyruvic acid (IPA) from L-tryptophan by the aminotransferase tdiD. The nonribosomal peptide synthase tdiA then immediately converts unstable IPA to didemethylasterriquinone D (DDAQ D), via condensation of 2 IPA molecules. The symmetric connectivity of the 2 IPA molecules is thought to arise by head-to-tail dual Claisen condensations facilitated by the TE domain. TdiB then catalyzes reverse prenylation by transferring dimethylallyl diphosphate to carbon atom 2' of DDAQ D, to yield asterriquinone C-1. Finally, tdiC and tdiE enzymes robustly convert asterriquinone C-1 to terrequinone A via a transformation involving regular prenylation at carbon atom 5, which requires elimination of the hydroxy group on C-5. In Emericella nidulans (strain FGSC A4 / ATCC 38163 / CBS 112.46 / NRRL 194 / M139) (Aspergillus nidulans), this protein is Probable NADPH-dependent quinone reductase tdiC.